Here is a 213-residue protein sequence, read N- to C-terminus: PRA1 family protein B2 (213 aa).

The interval 1–21 is disordered; it reads MSSSPAILPVTNQQAATQSQP. 5 consecutive transmembrane segments (helical) span residues 75 to 94, 98 to 117, 137 to 157, 161 to 181, and 190 to 210; these read LAYF…AFSL, PFSL…LYLF, LLGL…GSLL, LTIG…DDLF, and AGLL…SVVA.

The protein belongs to the PRA1 family. Interacts with PRA1B1, PRA1B3, PRA1B4, PRA1B5, PRA1B6 and PRA1E.

Its subcellular location is the endosome membrane. May be involved in both secretory and endocytic intracellular trafficking in the endosomal/prevacuolar compartments. The chain is PRA1 family protein B2 (PRA1B2) from Arabidopsis thaliana (Mouse-ear cress).